The primary structure comprises 888 residues: Alanine--tRNA ligase (888 aa).

Zn(2+) is bound by residues H564, H568, C676, and H680.

This sequence belongs to the class-II aminoacyl-tRNA synthetase family. Zn(2+) is required as a cofactor.

The protein localises to the cytoplasm. The enzyme catalyses tRNA(Ala) + L-alanine + ATP = L-alanyl-tRNA(Ala) + AMP + diphosphate. Catalyzes the attachment of alanine to tRNA(Ala) in a two-step reaction: alanine is first activated by ATP to form Ala-AMP and then transferred to the acceptor end of tRNA(Ala). Also edits incorrectly charged Ser-tRNA(Ala) and Gly-tRNA(Ala) via its editing domain. The protein is Alanine--tRNA ligase of Mesorhizobium japonicum (strain LMG 29417 / CECT 9101 / MAFF 303099) (Mesorhizobium loti (strain MAFF 303099)).